Reading from the N-terminus, the 239-residue chain is uncharacterized protein (239 aa).

The next 6 membrane-spanning stretches (helical) occupy residues 30 to 50 (VALL…IELI), 76 to 96 (LYLG…IFII), 107 to 127 (LIPI…FGYI), 157 to 177 (FIIL…FQIL), 188 to 208 (MMLS…AIIT), and 214 to 234 (LIQL…ILVL).

Belongs to the TatC family.

It localises to the plastid. It is found in the chloroplast membrane. This is an uncharacterized protein from Cyanidium caldarium (Red alga).